Consider the following 333-residue polypeptide: Holliday junction branch migration complex subunit RuvB (333 aa).

Positions 1–181 (MTRILDNDLI…FGITGHMEYY (181 aa)) are large ATPase domain (RuvB-L). Residues L20, R21, G62, K65, T66, T67, 128-130 (EDF), R171, Y181, and R218 each bind ATP. T66 is a Mg(2+) binding site. The interval 182 to 252 (QTADLTEIVE…ITDKALTMLD (71 aa)) is small ATPAse domain (RuvB-S). The segment at 255–333 (QEGLDYVDQK…HLGYPYEKKH (79 aa)) is head domain (RuvB-H). Positions 291, 310, 312, and 315 each coordinate DNA.

It belongs to the RuvB family. In terms of assembly, homohexamer. Forms an RuvA(8)-RuvB(12)-Holliday junction (HJ) complex. HJ DNA is sandwiched between 2 RuvA tetramers; dsDNA enters through RuvA and exits via RuvB. An RuvB hexamer assembles on each DNA strand where it exits the tetramer. Each RuvB hexamer is contacted by two RuvA subunits (via domain III) on 2 adjacent RuvB subunits; this complex drives branch migration. In the full resolvosome a probable DNA-RuvA(4)-RuvB(12)-RuvC(2) complex forms which resolves the HJ.

It localises to the cytoplasm. It carries out the reaction ATP + H2O = ADP + phosphate + H(+). Its function is as follows. The RuvA-RuvB-RuvC complex processes Holliday junction (HJ) DNA during genetic recombination and DNA repair, while the RuvA-RuvB complex plays an important role in the rescue of blocked DNA replication forks via replication fork reversal (RFR). RuvA specifically binds to HJ cruciform DNA, conferring on it an open structure. The RuvB hexamer acts as an ATP-dependent pump, pulling dsDNA into and through the RuvAB complex. RuvB forms 2 homohexamers on either side of HJ DNA bound by 1 or 2 RuvA tetramers; 4 subunits per hexamer contact DNA at a time. Coordinated motions by a converter formed by DNA-disengaged RuvB subunits stimulates ATP hydrolysis and nucleotide exchange. Immobilization of the converter enables RuvB to convert the ATP-contained energy into a lever motion, pulling 2 nucleotides of DNA out of the RuvA tetramer per ATP hydrolyzed, thus driving DNA branch migration. The RuvB motors rotate together with the DNA substrate, which together with the progressing nucleotide cycle form the mechanistic basis for DNA recombination by continuous HJ branch migration. Branch migration allows RuvC to scan DNA until it finds its consensus sequence, where it cleaves and resolves cruciform DNA. In Streptococcus equi subsp. zooepidemicus (strain MGCS10565), this protein is Holliday junction branch migration complex subunit RuvB.